Reading from the N-terminus, the 351-residue chain is 3-dehydroquinate synthase (351 aa).

NAD(+) is bound by residues 60 to 65, 94 to 98, 118 to 119, lysine 131, lysine 140, and 158 to 161; these read DGEEYK, GVISD, TT, and FLKT. 3 residues coordinate Zn(2+): glutamate 173, histidine 239, and histidine 256.

This sequence belongs to the sugar phosphate cyclases superfamily. Dehydroquinate synthase family. The cofactor is Co(2+). Zn(2+) serves as cofactor. Requires NAD(+) as cofactor.

The protein localises to the cytoplasm. The catalysed reaction is 7-phospho-2-dehydro-3-deoxy-D-arabino-heptonate = 3-dehydroquinate + phosphate. It functions in the pathway metabolic intermediate biosynthesis; chorismate biosynthesis; chorismate from D-erythrose 4-phosphate and phosphoenolpyruvate: step 2/7. Functionally, catalyzes the conversion of 3-deoxy-D-arabino-heptulosonate 7-phosphate (DAHP) to dehydroquinate (DHQ). The polypeptide is 3-dehydroquinate synthase (Campylobacter jejuni subsp. doylei (strain ATCC BAA-1458 / RM4099 / 269.97)).